A 1613-amino-acid chain; its full sequence is THO complex subunit 2 (1613 aa).

Coiled-coil stretches lie at residues 293-339 (NSIM…KVEK) and 896-965 (HTSY…NWLL). The short motif at 923-928 (KKKKEK) is the Nuclear localization signal element. Residues 1182 to 1586 (PENEFHNKDP…GGKEEKKQYP (405 aa)) are disordered. Residues 1218–1234 (KSDESSTEETDKSRERS) show a composition bias toward basic and acidic residues. Ser-1222 is subject to Phosphoserine. Positions 1251-1262 (GNSSNGNSGSNS) are enriched in low complexity. Basic and acidic residues-rich tracts occupy residues 1264–1284 (AVKE…KEKT), 1293–1342 (VLGK…EKFK), and 1352–1382 (STQE…KGGE). Thr-1384 is modified (phosphothreonine). Residues Ser-1389, Ser-1392, and Ser-1416 each carry the phosphoserine modification. The segment covering 1415-1424 (PSPSHSSTVK) has biased composition (polar residues). Thr-1442 carries the phosphothreonine modification. Residues 1448–1503 (KSKEREMDKKDLDKSRERSREREKKDEKDRKERKRDHSNNDREVPPDLTKRRKEEN) show a composition bias toward basic and acidic residues. 3 positions are modified to phosphoserine: Ser-1449, Ser-1485, and Ser-1515. The stretch at 1464-1491 (ERSREREKKDEKDRKERKRDHSNNDREV) forms a coiled coil. The segment covering 1523–1584 (NEKDKEKNKS…SSGGKEEKKQ (62 aa)) has biased composition (basic and acidic residues).

This sequence belongs to the THOC2 family. In terms of assembly, component of the THO subcomplex, which is composed of THOC1, THOC2, THOC3, THOC5, THOC6 and THOC7. The THO subcomplex interacts with DDX39B to form the THO-DDX39B complex which multimerizes into a 28-subunit tetrameric assembly. Component of the transcription/export (TREX) complex at least composed of ALYREF/THOC4, DDX39B, SARNP/CIP29, CHTOP and the THO subcomplex; in the complex interacts with THOC1, THOC3, THOC5, THOC7 and DDX39B. TREX seems to have a dynamic structure involving ATP-dependent remodeling. Interacts with POLDIP3 and ZC3H11A.

It localises to the nucleus. Its subcellular location is the nucleus speckle. It is found in the cytoplasm. Its function is as follows. Component of the THO subcomplex of the TREX complex which is thought to couple mRNA transcription, processing and nuclear export, and which specifically associates with spliced mRNA and not with unspliced pre-mRNA. Required for efficient export of polyadenylated RNA and spliced mRNA. The THOC1-THOC2-THOC3 core complex alone is sufficient to bind export factor NXF1-NXT1 and promote ATPase activity of DDX39B; in the complex THOC2 is the only component that directly interacts with DDX39B. TREX is recruited to spliced mRNAs by a transcription-independent mechanism, binds to mRNA upstream of the exon-junction complex (EJC) and is recruited in a splicing- and cap-dependent manner to a region near the 5' end of the mRNA where it functions in mRNA export to the cytoplasm via the TAP/NXF1 pathway. Required for NXF1 localization to the nuclear rim. THOC2 (and probably the THO complex) is involved in releasing mRNA from nuclear speckle domains. Plays a role for proper neuronal development. This Dasypus novemcinctus (Nine-banded armadillo) protein is THO complex subunit 2 (THOC2).